The primary structure comprises 138 residues: Large ribosomal subunit protein uL16 (138 aa).

Residues 1–13 (MLQPSRRKFRKEQ) show a composition bias toward basic residues. The tract at residues 1-20 (MLQPSRRKFRKEQKGRNTGV) is disordered.

The protein belongs to the universal ribosomal protein uL16 family. In terms of assembly, part of the 50S ribosomal subunit.

Functionally, binds 23S rRNA and is also seen to make contacts with the A and possibly P site tRNAs. The chain is Large ribosomal subunit protein uL16 from Leptothrix cholodnii (strain ATCC 51168 / LMG 8142 / SP-6) (Leptothrix discophora (strain SP-6)).